The chain runs to 246 residues: MNNNTTAPTYTLRGLQLIGWRDMQHALDYLFADGQLKQGTLVAINAEKMLTIEDNAEVRELINAAEFKYADGISIVRSVRKKYPQAQVSRVAGADLWEELMARAGKEGTPVFLVGGKPEVLAQTEAKLRNQWNVNIVGSQDGYFKPEQRQALFERIHASGAQIVTVAMGSPKQEIFMRDCRLVHPDALYMGVGGTYDVFTGHVKRAPKIWQTLGLEWLYRLLSQPSRIKRQLRLLRYLRWHYTGNL.

Belongs to the glycosyltransferase 26 family.

It catalyses the reaction UDP-N-acetyl-alpha-D-mannosaminouronate + N-acetyl-alpha-D-glucosaminyl-di-trans,octa-cis-undecaprenyl diphosphate = beta-D-ManNAcA-(1-&gt;4)-alpha-D-GlcNAc-di-trans,octa-cis-undecaprenyl diphosphate + UDP + H(+). It functions in the pathway bacterial outer membrane biogenesis; enterobacterial common antigen biosynthesis. In terms of biological role, catalyzes the synthesis of Und-PP-GlcNAc-ManNAcA (Lipid II), the second lipid-linked intermediate involved in enterobacterial common antigen (ECA) synthesis. In Shigella flexneri, this protein is UDP-N-acetyl-D-mannosaminuronic acid transferase.